The chain runs to 373 residues: MLNKNTIFFGLLLFIPISLLGHWLHWDEVSIFLTASLAIIPLAAFMGEATEEIAIVVGPTLGGLLNATFGNATELILAFIALKSGLISVVKATITGSIISNLLLVMGFAMLLGGLRYKEQVFQSEVARVNASSMNLAVIAILLPTAVEHTSNGIGEETLQTLSVAVAIVLIIVYGLTLLFSMKTHSYLCEVGEIDQQSSSAMESGDKIPEKKPEDVNLWFWLGILLVVTITVAIESELLVNSLESATESLGLTALFTGVILLPVIGNAAEHFTAVTVAMKNKMDLSLSVAVGSTLQIALFVAPVLVIAGWIMGQPMDLDFNPFELVAVAVSVLIANSISSDGKSNWLEGSLLLATYIVIGLAFFFHPVVPEIG.

The next 11 helical transmembrane spans lie at 6–26, 29–49, 61–81, 94–114, 134–154, 162–182, 220–240, 249–269, 291–311, 318–338, and 349–369; these read TIFFGLLLFIPISLLGHWLHW, VSIFLTASLAIIPLAAFMGEA, LGGLLNATFGNATELILAFIA, ITGSIISNLLLVMGFAMLLGG, MNLAVIAILLPTAVEHTSNGI, LSVAVAIVLIIVYGLTLLFSM, FWLGILLVVTITVAIESELLV, SLGLTALFTGVILLPVIGNAA, VGSTLQIALFVAPVLVIAGWI, LDFNPFELVAVAVSVLIANSI, and GSLLLATYIVIGLAFFFHPVV.

This sequence belongs to the Ca(2+):cation antiporter (CaCA) (TC 2.A.19) family. Cation/proton exchanger (CAX) subfamily.

The protein localises to the cell inner membrane. Ca(+)/H(+) antiporter that extrudes calcium in exchange for external protons. Plays an important role in salt tolerance. Does not transport sodium or lithium. This chain is Ca(2+)/H(+) antiporter, found in Aphanothece halophytica.